Here is a 729-residue protein sequence, read N- to C-terminus: Transcriptional activator ptaB (729 aa).

Pro residues predominate over residues Met-1 to Pro-12. 4 disordered regions span residues Met-1–Ala-69, Ala-207–Ala-341, Leu-505–Glu-538, and Arg-614–Ala-729. Residues Pro-38–Ala-56 are compositionally biased toward low complexity. Residues Ala-272–Gln-285 show a composition bias toward pro residues. Composition is skewed to low complexity over residues Leu-286–Pro-300 and Gln-307–Ala-341. The segment covering Arg-614 to Ala-625 has biased composition (polar residues). The span at Gly-655–Gln-671 shows a compositional bias: low complexity. The span at Ala-672–Thr-682 shows a compositional bias: polar residues.

It belongs to the MFG1 family. As to quaternary structure, interacts with somA.

It localises to the nucleus. In terms of biological role, transcriptional regulator that forms a complex with somA to control biofilm formation. This is Transcriptional activator ptaB from Aspergillus fumigatus (strain ATCC MYA-4609 / CBS 101355 / FGSC A1100 / Af293) (Neosartorya fumigata).